The chain runs to 1276 residues: Sterol regulatory element-binding protein cleavage-activating protein (1276 aa).

Topologically, residues 1 to 18 are cytoplasmic; it reads MTLTERLREKISQAFYNH. The chain crosses the membrane as a helical span at residues 19–39; sequence GLLCASYPIPIILFTGLCILA. Residues 40–279 lie on the Lumenal side of the membrane; the sequence is CCYPLLKLPL…NLVHVHFKEE (240 aa). The interval 46–284 is loop-1; sequence KLPLPGTGPV…HFKEEIGIAE (239 aa). The segment at 60–81 is disordered; that stretch reads PVKGYSPPPADSDHKQGEPSEQ. Residue asparagine 263 is glycosylated (N-linked (GlcNAc...) asparagine). The helical transmembrane segment at 280 to 300 threads the bilayer; it reads IGIAELIPLVTTYIILFAYIY. The SSD domain occupies 284-442; it reads ELIPLVTTYI…MLFFTTVLSI (159 aa). The Cytoplasmic segment spans residues 301-312; that stretch reads FSTRKIDMVKSK. Residues 313–333 form a helical membrane-spanning segment; it reads WGLALAAVVTVLSSLLMSVGL. At 334 to 344 the chain is on the lumenal side; the sequence is CTLFGLTPTLN. The helical transmembrane segment at 345–365 threads the bilayer; it reads GGEIFPYLVVVIGLENVLVLT. The Cytoplasmic segment spans residues 366–401; it reads KSVVSTPVDLEVKLRIAQGLSSESWSIMKNVATELG. The helical transmembrane segment at 402–422 threads the bilayer; the sequence is IILIGYFTLVPAIQEFCLFAV. A topological domain (lumenal) is located at residue valine 423. Residues 424-444 form a helical membrane-spanning segment; sequence GLVSDFFLQMLFFTTVLSIDI. Residues 445 to 518 are Cytoplasmic-facing; that stretch reads RRMELADLNK…FLARTRLAQR (74 aa). An ER export signal motif is present at residues 447–452; that stretch reads MELADL. Residues lysine 454 and lysine 466 each participate in a glycyl lysine isopeptide (Lys-Gly) (interchain with G-Cter in ubiquitin) cross-link. The helical transmembrane segment at 519 to 539 threads the bilayer; it reads LIMAGTVVWIGILVYTDPAGL. Residues 535–710 are loop-7; sequence DPAGLRTYLA…QTHGDITLYK (176 aa). Over 540–707 the chain is Lumenal; that stretch reads RTYLAAQVTE…GGTQTHGDIT (168 aa). 2 N-linked (GlcNAc...) asparagine glycosylation sites follow: asparagine 590 and asparagine 641. A helical transmembrane segment spans residues 708–728; sequence LYKVAALGLAAGIVLVLLLLC. Topologically, residues 729-1276 are cytoplasmic; it reads LYRVLCPRNY…YVPSVLEKLD (548 aa). The tract at residues 731-1276 is interaction with SREBF2; the sequence is RVLCPRNYGQ…YVPSVLEKLD (546 aa). Residues 771–811 form a WD 1 repeat; it reads VLRGHLMDIECLASDGMLLVSCCLAGQVCVWDAQTGDCLTR. 6 positions are modified to phosphoserine: serine 821, serine 837, serine 843, serine 850, serine 905, and serine 934. Residues 834–903 are disordered; the sequence is ERLSDGGKAS…RHRAGCGRSR (70 aa). Positions 928 to 958 are disordered; sequence SALRPPSPGPPLPQASQEEGTAPEKGSPPLA. 2 WD repeats span residues 949–999 and 1002–1039; these read APEK…LCCS and EISSGITALVFLDRRIVAARLNGSLDFFSLETHTSLSP. An Omega-N-methylarginine modification is found at arginine 1048. WD repeat units follow at residues 1074–1111, 1114–1152, 1155–1192, and 1194–1232; these read AHQKPITALRAAAGRLVTGSQDHTLRVFRLEDSCCLFT, GHSGAITTVYIDQTMVLASGGQDGAICLWDVLTGSRVSH, AHRGDVTSLTCTTSCVISSGLDDFINIWDRSTGIKLYS, and QQDLGCGASLGVISDNLLVTGGQGCVSFWDLNYGDLLQT.

This sequence belongs to the WD repeat SCAP family. As to quaternary structure, membrane region forms a homotetramer. Component of the SCAP-SREBP complex (composed of SCAP and SREBF1/SREBP1 or SREBF2/SREBP2); interacts with SREBF1/SREBP1 or SREBF2/SREBP2 through its C-terminal cytoplasmic domain. Forms a ternary complex with INSIG1 or INSIG2 through its transmembrane domains at high sterol concentrations. Interacts with PAQR3; the interaction anchors the SCAP-SREBP complex to the Golgi apparatus in low cholesterol conditions. Interacts with the SEC23-SEC24 complex in a SAR1-GTP-dependent manner through an ER export signal in its third cytoplasmic loop. Interacts with RNF139; the interaction inhibits the interaction of SCAP with SEC24B and hampering the ER to Golgi transport of the SCAP-SREBP complex. Interacts with SPRING1. In terms of processing, ubiquitinated at Lys-454 and Lys-466. RNF145 triggers ubiquitination of SCAP, likely inhibiting SCAP-SREBP complex transport to the Golgi apparatus and the subsequent processing/maturation of SREBF2/SREBP2.

The protein resides in the endoplasmic reticulum membrane. The protein localises to the golgi apparatus membrane. It localises to the cytoplasmic vesicle. It is found in the COPII-coated vesicle membrane. In terms of biological role, escort protein required for cholesterol as well as lipid homeostasis. Regulates export of the SCAP-SREBP complex from the endoplasmic reticulum to the Golgi upon low cholesterol, thereby regulating the processing of sterol regulatory element-binding proteins (SREBPs) SREBF1/SREBP1 and SREBF2/SREBP2. At high sterol concentrations, formation of a ternary complex with INSIG (INSIG1 or INSIG2) leads to mask the ER export signal in SCAP, promoting retention of the complex in the endoplasmic reticulum. Low sterol concentrations trigger release of INSIG, a conformational change in the SSD domain of SCAP, unmasking of the ER export signal, promoting recruitment into COPII-coated vesicles and transport of the SCAP-SREBP to the Golgi: in the Golgi, SREBPs are then processed, releasing the transcription factor fragment of SREBPs from the membrane, its import into the nucleus and up-regulation of LDLR, INSIG1 and the mevalonate pathway. Binds cholesterol via its SSD domain. The protein is Sterol regulatory element-binding protein cleavage-activating protein of Rattus norvegicus (Rat).